The primary structure comprises 288 residues: ATP synthase gamma chain (288 aa).

Belongs to the ATPase gamma chain family. In terms of assembly, F-type ATPases have 2 components, CF(1) - the catalytic core - and CF(0) - the membrane proton channel. CF(1) has five subunits: alpha(3), beta(3), gamma(1), delta(1), epsilon(1). CF(0) has three main subunits: a, b and c.

The protein resides in the cell inner membrane. In terms of biological role, produces ATP from ADP in the presence of a proton gradient across the membrane. The gamma chain is believed to be important in regulating ATPase activity and the flow of protons through the CF(0) complex. The polypeptide is ATP synthase gamma chain (Aeromonas hydrophila subsp. hydrophila (strain ATCC 7966 / DSM 30187 / BCRC 13018 / CCUG 14551 / JCM 1027 / KCTC 2358 / NCIMB 9240 / NCTC 8049)).